Here is a 529-residue protein sequence, read N- to C-terminus: Tyrosinase (529 aa).

An N-terminal signal peptide occupies residues 1 to 18; that stretch reads MLLAALCCLLWSFRTSAG. The Lumenal segment spans residues 19 to 472; sequence HFPRACASSK…IKPFLEQASR (454 aa). N-linked (GlcNAc...) asparagine glycosylation is found at Asn-86, Asn-111, and Asn-161. Cu cation contacts are provided by His-180, His-202, and His-211. N-linked (GlcNAc...) asparagine glycans are attached at residues Asn-230 and Asn-336. Positions 362 and 366 each coordinate Cu cation. Asn-370 carries N-linked (GlcNAc...) asparagine glycosylation. Residue His-389 participates in Cu cation binding. A helical membrane pass occupies residues 473-495; that stretch reads IWPWLIGAAVVGSVLTAVLGRLT. Residues 496-529 are Cytoplasmic-facing; the sequence is SLLCRRKRKQLREERQPLLMEKEDYHSLLYQTHV.

The protein belongs to the tyrosinase family. In terms of assembly, forms an OPN3-dependent complex with DCT in response to blue light in melanocytes. Cu(2+) serves as cofactor. Glycosylated.

Its subcellular location is the melanosome membrane. It localises to the melanosome. It catalyses the reaction 2 L-dopa + O2 = 2 L-dopaquinone + 2 H2O. The catalysed reaction is L-tyrosine + O2 = L-dopaquinone + H2O. It carries out the reaction 2 5,6-dihydroxyindole-2-carboxylate + O2 = 2 indole-5,6-quinone-2-carboxylate + 2 H2O. Functionally, this is a copper-containing oxidase that functions in the formation of pigments such as melanins and other polyphenolic compounds. Catalyzes the initial and rate limiting step in the cascade of reactions leading to melanin production from tyrosine. In addition to hydroxylating tyrosine to DOPA (3,4-dihydroxyphenylalanine), also catalyzes the oxidation of DOPA to DOPA-quinone, and possibly the oxidation of DHI (5,6-dihydroxyindole) to indole-5,6 quinone. This Felis catus (Cat) protein is Tyrosinase (TYR).